The primary structure comprises 150 residues: UPF0756 membrane protein ECA1265 (150 aa).

The next 4 membrane-spanning stretches (helical) occupy residues M1–S21, Y51–G71, F82–G102, and A127–I147.

This sequence belongs to the UPF0756 family.

It localises to the cell membrane. The chain is UPF0756 membrane protein ECA1265 from Pectobacterium atrosepticum (strain SCRI 1043 / ATCC BAA-672) (Erwinia carotovora subsp. atroseptica).